Here is a 219-residue protein sequence, read N- to C-terminus: Leukocyte surface antigen CD53 (219 aa).

Residues 1–11 are Cytoplasmic-facing; that stretch reads MGMSSLKLLKF. Residues 12–32 traverse the membrane as a helical segment; that stretch reads VLFFFNLIFWFCGCCILGLGI. The Extracellular portion of the chain corresponds to 33–54; sequence YLLIHSKFGVLFHNLPSLTLGN. The chain crosses the membrane as a helical span at residues 55 to 69; that stretch reads VLVIVGSVIMVVAFL. At 70-80 the chain is on the cytoplasmic side; sequence GCMGSIKENKC. Residues 81 to 106 form a helical membrane-spanning segment; the sequence is LLMSFFVLLLIILLAEVTLAILLFVY. Residues 107–181 are Extracellular-facing; the sequence is EQKLKEYVAE…IQAKQWFHSN (75 aa). Asn129 and Asn148 each carry an N-linked (GlcNAc...) asparagine glycan. Residues 182–206 form a helical membrane-spanning segment; sequence FLYIGITTICVCVIQVLGMSFALTL. Topologically, residues 207–219 are cytoplasmic; sequence NCQIDKTSQVLGL.

It belongs to the tetraspanin (TM4SF) family. Interacts with SCIMP. Interacts with CD45/PTPRC. Interacts with IL7R. Interacts with RBL2 and PPP2CA.

Its subcellular location is the cell membrane. It is found in the cell junction. The protein localises to the membrane. The protein resides in the synapse. Functionally, structural component of specialized membrane microdomains known as tetraspanin-enriched microdomains (TERMs), which act as platforms for receptor clustering and signaling. Participates thereby in diverse biological functions such as cell signal transduction, adhesion, migration and protein trafficking. Plays a role in the activation of monocytes and B-cells. Acts as an essential regulator of B-cell development by promoting interleukin-7 receptor/IL7R signaling. Also promotes, in B-cells, the BCR signaling by recruiting PKC to the plasma membrane in order to phosphorylate its substrates. Plays an essential role in B- and T-cells homing to lymph nodes by stabilizing L-selectin/SELL cell surface expression. Also mediates metabolic and inflammatory functions in hepatocytes and adipose tissue by promoting TNF-alpha and LPS signaling independent of the immune compartment. This chain is Leukocyte surface antigen CD53 (CD53), found in Bos taurus (Bovine).